Here is a 378-residue protein sequence, read N- to C-terminus: MSGNTLGTLFCVTSFGESHGPAIGCVIDGCPPGLSLTAADIQGELDRRKPGTSRHVTQRREPDEVEILSGVFEGVTTGTPIALLIRNQDQRSKDYGNIAETFRPGHADYPYWQKYGIRDYRGGGRSSARETAVRVAAGAVARKWLSERYGIVIRGYMAQLGPLPIPFVSWDAVGDNPFFAPNAEIVPQLESYMDELRKSGDSVGARINVVASGVPVGWGEPVYDRLDADIAYAMMSINAVKGVEIGAGFASVAQLGTEHGDELTPEGFLSNNAGGVLGGISSGQDVLVSMAIKPTSSIRLDRRSIDREGNPVIVNTHGRHDPCVGIRATPVAEAMLALVLMDHALRHRAQCGDVRTATPQIAALAPEGVQAVPSPRAE.

Arginine 48 and arginine 54 together coordinate NADP(+). Residues 125–127, 238–239, glycine 278, 293–297, and arginine 319 each bind FMN; these read RSS, NA, and KPTSS.

This sequence belongs to the chorismate synthase family. In terms of assembly, homotetramer. The cofactor is FMNH2.

The catalysed reaction is 5-O-(1-carboxyvinyl)-3-phosphoshikimate = chorismate + phosphate. The protein operates within metabolic intermediate biosynthesis; chorismate biosynthesis; chorismate from D-erythrose 4-phosphate and phosphoenolpyruvate: step 7/7. In terms of biological role, catalyzes the anti-1,4-elimination of the C-3 phosphate and the C-6 proR hydrogen from 5-enolpyruvylshikimate-3-phosphate (EPSP) to yield chorismate, which is the branch point compound that serves as the starting substrate for the three terminal pathways of aromatic amino acid biosynthesis. This reaction introduces a second double bond into the aromatic ring system. The protein is Chorismate synthase of Azoarcus sp. (strain BH72).